The sequence spans 189 residues: Glucose-6-phosphate isomerase (189 aa).

4 residues coordinate Fe cation: H88, H90, E97, and H136.

This sequence belongs to the archaeal-type GPI family. As to quaternary structure, homodimer. Fe cation is required as a cofactor.

Its subcellular location is the cytoplasm. It catalyses the reaction alpha-D-glucose 6-phosphate = beta-D-fructose 6-phosphate. Its pathway is carbohydrate degradation; glycolysis; D-glyceraldehyde 3-phosphate and glycerone phosphate from D-glucose: step 2/4. The protein is Glucose-6-phosphate isomerase (pgiA) of Pyrococcus horikoshii (strain ATCC 700860 / DSM 12428 / JCM 9974 / NBRC 100139 / OT-3).